The following is a 37-amino-acid chain: Large ribosomal subunit protein bL36 (37 aa).

Belongs to the bacterial ribosomal protein bL36 family.

The protein is Large ribosomal subunit protein bL36 of Synechococcus sp. (strain CC9311).